The chain runs to 157 residues: MAKVESFELDHTKVKAPYVRLITVETGNKGDKISNFDLRLVQPNENAIPTAGLHTIEHLLAGLLRDRMDGIIDCSPFGCRTGFHLIAWGEPTTTEVAKALKGALEEIANVTKWEDVPGTDIYSCGNYRDHSLFSAKEWAKKILDDGISDQPFERNVI.

3 residues coordinate Fe cation: H54, H58, and C124.

The protein belongs to the LuxS family. Homodimer. Fe cation serves as cofactor.

It catalyses the reaction S-(5-deoxy-D-ribos-5-yl)-L-homocysteine = (S)-4,5-dihydroxypentane-2,3-dione + L-homocysteine. In terms of biological role, involved in the synthesis of autoinducer 2 (AI-2) which is secreted by bacteria and is used to communicate both the cell density and the metabolic potential of the environment. The regulation of gene expression in response to changes in cell density is called quorum sensing. Catalyzes the transformation of S-ribosylhomocysteine (RHC) to homocysteine (HC) and 4,5-dihydroxy-2,3-pentadione (DPD). This chain is S-ribosylhomocysteine lyase, found in Pediococcus pentosaceus (strain ATCC 25745 / CCUG 21536 / LMG 10740 / 183-1w).